A 161-amino-acid chain; its full sequence is Large ribosomal subunit protein uL11 (161 aa).

It belongs to the universal ribosomal protein uL11 family. As to quaternary structure, part of the ribosomal stalk of the 50S ribosomal subunit. Interacts with L10 and the large rRNA to form the base of the stalk. L10 forms an elongated spine to which L12 dimers bind in a sequential fashion forming a multimeric L10(L12)X complex.

In terms of biological role, forms part of the ribosomal stalk which helps the ribosome interact with GTP-bound translation factors. In Methanosarcina acetivorans (strain ATCC 35395 / DSM 2834 / JCM 12185 / C2A), this protein is Large ribosomal subunit protein uL11.